The chain runs to 124 residues: Fluoride-specific ion channel FluC (124 aa).

3 helical membrane passes run 36 to 56, 63 to 83, and 99 to 119; these read VGTMIVNVVGSFLMGVLVVVL, YAPFLMTGMLGGFTTFSAFSL, and AYVGLSVGLSLAGLMAGMAAV. Gly73 and Thr76 together coordinate Na(+).

This sequence belongs to the fluoride channel Fluc/FEX (TC 1.A.43) family.

The protein resides in the cell inner membrane. It carries out the reaction fluoride(in) = fluoride(out). With respect to regulation, na(+) is not transported, but it plays an essential structural role and its presence is essential for fluoride channel function. In terms of biological role, fluoride-specific ion channel. Important for reducing fluoride concentration in the cell, thus reducing its toxicity. This Cereibacter sphaeroides (strain ATCC 17029 / ATH 2.4.9) (Rhodobacter sphaeroides) protein is Fluoride-specific ion channel FluC.